Reading from the N-terminus, the 146-residue chain is Angiogenin (146 aa).

A signal peptide spans 1–24; the sequence is MVMGLGLFLLVFMLGLGLTPPTLA. Position 25 is a pyrrolidone carboxylic acid (Gln25). His37 serves as the catalytic Proton acceptor. Position 45 (Arg45) interacts with tRNA. 3 disulfides stabilise this stretch: Cys50-Cys105, Cys63-Cys116, and Cys81-Cys131. A Nucleolar localization signal motif is present at residues 55-59; the sequence is RRRGL. TRNA-binding residues include Cys105 and Ile127. His138 (proton donor) is an active-site residue.

The protein belongs to the pancreatic ribonuclease family. In terms of assembly, homodimer. Interacts with RNH1; inhibiting ANG ribonuclease activity. Interacts with PCNA.

It localises to the secreted. It is found in the nucleus. Its subcellular location is the nucleolus. The protein resides in the cytoplasm. The protein localises to the stress granule. With respect to regulation, has weak tRNA ribonuclease activity by itself due to partial autoinhibition by its C-terminus, which folds into a short alpha-helix that partially occludes the substrate-binding site. In absence of stress, the ribonuclease activity is inhibited by RNH1 in the cytoplasm. In response to stress, dissociates from RNH1 in the cytoplasm and associates with cytoplasmic ribosomes with vacant A-sites: ribosomes directly activate the tRNA ribonuclease activity of ANG by refolding the C-terminal alpha-helix. In response to stress, the angiogenic activity of ANG is inhibited by RNH1 in the nucleus. Its function is as follows. Secreted ribonuclease that can either promote or restrict cell proliferation of target cells, depending on the context. Endocytosed in target cells via its receptor PLXNB2 and translocates to the cytoplasm or nucleus. Under stress conditions, localizes to the cytoplasm and promotes the assembly of stress granules (SGs): specifically cleaves a subset of tRNAs within anticodon loops to produce tRNA-derived stress-induced fragments (tiRNAs), resulting in translation repression and inhibition of cell proliferation. tiRNas also prevent formation of apoptosome, thereby promoting cell survival. Preferentially cleaves RNAs between a pyrimidine and an adenosine residue, suggesting that it cleaves the anticodon loop of tRNA(Ala) (32-UUAGCAU-38) after positions 33 and 36. Cleaves a subset of tRNAs, including tRNA(Ala), tRNA(Glu), tRNA(Gly), tRNA(Lys), tRNA(Val), tRNA(His), tRNA(Asp) and tRNA(Sec). Under growth conditions and in differentiated cells, translocates to the nucleus and stimulates ribosomal RNA (rRNA) transcription, including that containing the initiation site sequences of 45S rRNA, thereby promoting cell growth and proliferation. Angiogenin induces vascularization of normal and malignant tissues via its ability to promote rRNA transcription. Involved in hematopoietic stem and progenitor cell (HSPC) growth and survival by promoting rRNA transcription in growth conditions and inhibiting translation in response to stress, respectively. Mediates the crosstalk between myeloid and intestinal epithelial cells to protect the intestinal epithelial barrier integrity: secreted by myeloid cells and promotes intestinal epithelial cells proliferation and survival. Also mediates osteoclast-endothelial cell crosstalk in growing bone: produced by osteoclasts and protects the neighboring vascular cells against senescence by promoting rRNA transcription. This chain is Angiogenin (ANG), found in Rhinopithecus avunculus (Tonkin snub-nosed monkey).